Here is a 254-residue protein sequence, read N- to C-terminus: NAD-dependent protein deacylase (254 aa).

Residues Met1–Glu250 form the Deacetylase sirtuin-type domain. NAD(+) is bound at residue Gly22–Trp41. Substrate is bound by residues Tyr66 and Arg69. Residue Gln104–Asp107 coordinates NAD(+). The Proton acceptor role is filled by His122. Residues Cys130, Cys133, Cys149, and Cys152 each contribute to the Zn(2+) site. NAD(+)-binding positions include Gly189–Ser191, Asn215–Glu217, and Ala233.

This sequence belongs to the sirtuin family. Class III subfamily. Zn(2+) is required as a cofactor.

Its subcellular location is the cytoplasm. It catalyses the reaction N(6)-acetyl-L-lysyl-[protein] + NAD(+) + H2O = 2''-O-acetyl-ADP-D-ribose + nicotinamide + L-lysyl-[protein]. The enzyme catalyses N(6)-succinyl-L-lysyl-[protein] + NAD(+) + H2O = 2''-O-succinyl-ADP-D-ribose + nicotinamide + L-lysyl-[protein]. Functionally, NAD-dependent lysine deacetylase and desuccinylase that specifically removes acetyl and succinyl groups on target proteins. Modulates the activities of several proteins which are inactive in their acylated form. The polypeptide is NAD-dependent protein deacylase (Thermus thermophilus (strain ATCC BAA-163 / DSM 7039 / HB27)).